A 542-amino-acid polypeptide reads, in one-letter code: Chaperonin GroEL 1 (542 aa).

ATP is bound by residues 29–32 (TLGP), 86–90 (DGTTT), Gly413, 477–479 (NAA), and Asp493.

It belongs to the chaperonin (HSP60) family. In terms of assembly, forms a cylinder of 14 subunits composed of two heptameric rings stacked back-to-back. Interacts with the co-chaperonin GroES.

It localises to the cytoplasm. It catalyses the reaction ATP + H2O + a folded polypeptide = ADP + phosphate + an unfolded polypeptide.. In terms of biological role, together with its co-chaperonin GroES, plays an essential role in assisting protein folding. The GroEL-GroES system forms a nano-cage that allows encapsulation of the non-native substrate proteins and provides a physical environment optimized to promote and accelerate protein folding. This chain is Chaperonin GroEL 1, found in Kineococcus radiotolerans (strain ATCC BAA-149 / DSM 14245 / SRS30216).